Here is a 92-residue protein sequence, read N- to C-terminus: Plasmid copy control protein CopR (92 aa).

Over residues 1–27 the composition is skewed to basic and acidic residues; it reads MELAFRESLKKMRGTKSKEKFSQELEM. 2 disordered regions span residues 1-40 and 63-92; these read MELA…SGKS and IPNE…NDFV. Positions 9–62 constitute an HTH cro/C1-type domain; the sequence is LKKMRGTKSKEKFSQELEMSRSNYSRIESGKSDPTIKTLEQIVKLTNSTLVVDL. The H-T-H motif DNA-binding region spans 20-39; it reads KFSQELEMSRSNYSRIESGK.

In terms of biological role, involved in copy control of plasmid pIP501. This Streptococcus agalactiae protein is Plasmid copy control protein CopR (copR).